Consider the following 369-residue polypeptide: Histidinol-phosphate aminotransferase (369 aa).

N6-(pyridoxal phosphate)lysine is present on Lys-222.

This sequence belongs to the class-II pyridoxal-phosphate-dependent aminotransferase family. Histidinol-phosphate aminotransferase subfamily. As to quaternary structure, homodimer. Requires pyridoxal 5'-phosphate as cofactor.

It carries out the reaction L-histidinol phosphate + 2-oxoglutarate = 3-(imidazol-4-yl)-2-oxopropyl phosphate + L-glutamate. It functions in the pathway amino-acid biosynthesis; L-histidine biosynthesis; L-histidine from 5-phospho-alpha-D-ribose 1-diphosphate: step 7/9. This Halalkalibacterium halodurans (strain ATCC BAA-125 / DSM 18197 / FERM 7344 / JCM 9153 / C-125) (Bacillus halodurans) protein is Histidinol-phosphate aminotransferase.